Reading from the N-terminus, the 707-residue chain is Protein O-mannosyl-transferase TMEM260 (707 aa).

8 consecutive transmembrane segments (helical) span residues 28-48, 71-91, 94-114, 141-161, 189-209, 222-242, 318-338, and 356-376; these read GGVA…PPSV, YPLF…GSIA, VNLL…FTVF, IAAE…ALTV, NQHT…FQLL, LSLY…SSYL, NPSL…FFAW, and FWMQ…AAVV. The Lumenal portion of the chain corresponds to 377 to 707; the sequence is SETNRVLNSN…LQSLRNRKNV (331 aa). N-linked (GlcNAc...) asparagine glycosylation is found at asparagine 407, asparagine 535, and asparagine 568.

The protein belongs to the glycosyltransferase 117 (GT117) family. Expressed in brain, heart, kidney, liver, lung, pancreas and placenta but are not detected in skeletal muscle.

It is found in the endoplasmic reticulum membrane. Its subcellular location is the membrane. It catalyses the reaction a di-trans,poly-cis-dolichyl beta-D-mannosyl phosphate + L-seryl-[protein] = 3-O-(alpha-D-mannosyl)-L-seryl-[protein] + a di-trans,poly-cis-dolichyl phosphate + H(+). The catalysed reaction is a di-trans,poly-cis-dolichyl beta-D-mannosyl phosphate + L-threonyl-[protein] = 3-O-(alpha-D-mannosyl)-L-threonyl-[protein] + a di-trans,poly-cis-dolichyl phosphate + H(+). In terms of biological role, O-mannosyl-transferase that transfers mannosyl residues to the hydroxyl group of serine or threonine residues of proteins. Specifically glycosylates the IPT/TIG domain of target proteins, such as MET and MST1R/RON. TMEM260-mediated O-mannosylated residues are composed of single mannose glycans that are not elongated or modified. The polypeptide is Protein O-mannosyl-transferase TMEM260 (Homo sapiens (Human)).